A 1146-amino-acid polypeptide reads, in one-letter code: Activator of SKN7 protein 10 (1146 aa).

Over residues 1 to 15 the composition is skewed to polar residues; that stretch reads MSDYFSSRPSQTLTP. Disordered regions lie at residues 1–32 and 171–194; these read MSDY…ASSI and ITDP…KVGL. S344 carries the phosphoserine modification. In terms of domain architecture, PH spans 482–606; that stretch reads CIKAGYFLKK…DCTLKDASST (125 aa). Positions 553–575 are disordered; it reads NNHHRQASDVHNSSTTTGGTAGA. A compositionally biased stretch (low complexity) spans 564–575; that stretch reads NSSTTTGGTAGA. Phosphoserine is present on S793. A Phosphothreonine modification is found at T808. 2 disordered regions span residues 835–854 and 909–982; these read MATS…PQSM and PVNS…TAMR. A compositionally biased stretch (low complexity) spans 912–924; it reads SPGSSNSESSSGG. Polar residues predominate over residues 939 to 950; sequence YTQRNSEGSSPC. Phosphoserine is present on S944. A compositionally biased stretch (low complexity) spans 958–968; it reads QQQQPLQMQPL. S969 carries the phosphoserine modification. A compositionally biased stretch (polar residues) spans 969-982; sequence SRTSSSSVNVTAMR. T1017 carries the post-translational modification Phosphothreonine. 3 positions are modified to phosphoserine: S1070, S1095, and S1098. The interval 1124–1146 is disordered; it reads GIQEDDGDSTNNDTIKLNQSIYS. The segment covering 1132–1146 has biased composition (polar residues); that stretch reads STNNDTIKLNQSIYS.

Belongs to the RGC1 family. In terms of assembly, component of the RNA polymerase II holoenzyme. Interacts with RPO21 and SSN8. In terms of processing, phosphorylated in response to various stresses. stress-induced phosphorylation is partially dependent on HOG1.

It localises to the cytoplasm. Positive regulator of FPS1 glycerol channel required for the glycerol efflux. As a component of the RNA polymerase II holoenzyme, is required for SSN8 destruction in response to oxidative stress but not heat shock. Required for cell survival in response to heat shock independent of SSN8. The sequence is that of Activator of SKN7 protein 10 (ASK10) from Saccharomyces cerevisiae (strain ATCC 204508 / S288c) (Baker's yeast).